A 354-amino-acid chain; its full sequence is Homer protein homolog 1 (354 aa).

Residues 1–110 form the WH1 domain; that stretch reads MGEQPIFSTR…EKFQEFKEAA (110 aa). N-acetylglycine is present on Gly-2. Residues 114–172 form a disordered region; it reads KEKSQEKMELTSTPSQESAGGDLQSPLTPESINGTDDERTPDLTQNSEPRPEPTQNALP. Composition is skewed to polar residues over residues 138–147 and 155–172; these read SPLTPESING and DLTQ…NALP. Positions 181–352 form a coiled coil; that stretch reads KHWEAELATL…LRDNLAKLLE (172 aa). The tract at residues 290-354 is required for tetramerization; sequence KLQEVEIRNK…DNLAKLLERS (65 aa). At Ser-306 the chain carries Phosphoserine.

This sequence belongs to the Homer family. Tetramer; this tetrameric structure is critical for forming the high-order complex with SHANK1, which in turn is necessary for the structural and functional integrity of dendritic spines. Interacts with GRM1, GRM5, ITPR1, DNM3, RYR1, RYR2 and SHANK3. Interacts with IFT57 and OPHN1. Encodes a coiled-coil structure that mediates homo- and heteromultimerization. Interacts with SHANK1; forms high-order polymerized complex with a mesh-like network structure, at least composed of SHANK1, HOMER1 and DLGAP1; the complex formation is SHANK1 multimerization dependent. Interacts with NFATC4. Interacts with DAGLA (via PPXXF motif); this interaction is required for the cell membrane localization of DAGLA. Interacts with SRGAP2.

It is found in the cytoplasm. The protein resides in the postsynaptic density. Its subcellular location is the synapse. It localises to the cell projection. The protein localises to the dendritic spine. In terms of biological role, postsynaptic density scaffolding protein. Binds and cross-links cytoplasmic regions of GRM1, GRM5, ITPR1, DNM3, RYR1, RYR2, SHANK1 and SHANK3. By physically linking GRM1 and GRM5 with ER-associated ITPR1 receptors, it aids the coupling of surface receptors to intracellular calcium release. May also couple GRM1 to PI3 kinase through its interaction with AGAP2. Forms a high-order complex with SHANK1, which in turn is necessary for the structural and functional integrity of dendritic spines. Negatively regulates T cell activation by inhibiting the calcineurin-NFAT pathway. Acts by competing with calcineurin/PPP3CA for NFAT protein binding, hence preventing NFAT activation by PPP3CA. This is Homer protein homolog 1 from Bos taurus (Bovine).